The following is a 474-amino-acid chain: MSTDSYTPSQEPGSKRLKTGESVFARRGVSPSTGGVASAYGNESEKKPSWLQTNKSDIDGKYDKYGERRNAHTTTRDSRLDRLKRVRQKSAEREDVGHEGDEGDEDEGILPYIHLQAANPAIIHNEKQENYRTFQSRISNRENRDINSIVRAHYNQRTQQAKQQGSRVNSPIYKMRNFNNAIKYILLGNWAKHNPEELDLFSFLDLCCGKGGDLNKCQFIGIDQYIGIDIADLSVKEAFERYTKQKARFRHSNQNSNRYTFEACFATGDCFTQFVPDILEPNFPGIIERAFPVDIVSAQFSLHYSFESEEKVRTLLTNVTRSLRSGGTFIGTIPSSDFIKAKIVDKHLQRDEKGKAKFGNSLYSVTFEKDPPEDGVFRPAFGNKYNYWLKDAVDNVPEYVVPFETLRSLCEEYDLVLKYKKSFTDIFNQEIPKYFSKLNKNLIDGMKRSDGKYGAEGDEKEAVAFYIGFVFEKV.

Positions 1-12 (MSTDSYTPSQEP) are enriched in polar residues. The interval 1 to 106 (MSTDSYTPSQ…GHEGDEGDED (106 aa)) is disordered. The segment covering 56–100 (SDIDGKYDKYGERRNAHTTTRDSRLDRLKRVRQKSAEREDVGHEG) has biased composition (basic and acidic residues). The mRNA cap 0 methyltransferase domain occupies 170 to 474 (SPIYKMRNFN…FYIGFVFEKV (305 aa)). 179–180 (NN) provides a ligand contact to mRNA. Positions 183, 207, 229, 269, 299, and 304 each coordinate S-adenosyl-L-methionine.

This sequence belongs to the class I-like SAM-binding methyltransferase superfamily. mRNA cap 0 methyltransferase family.

The protein localises to the nucleus. The enzyme catalyses a 5'-end (5'-triphosphoguanosine)-ribonucleoside in mRNA + S-adenosyl-L-methionine = a 5'-end (N(7)-methyl 5'-triphosphoguanosine)-ribonucleoside in mRNA + S-adenosyl-L-homocysteine. Its function is as follows. Responsible for methylating the 5'-cap structure of mRNAs. The sequence is that of mRNA cap guanine-N(7) methyltransferase (ABD1) from Candida albicans (strain SC5314 / ATCC MYA-2876) (Yeast).